The following is a 187-amino-acid chain: Protein GrpE (187 aa).

The segment at 1–26 is disordered; sequence MNDLKNAENGPDEADTPQGAPSQEPD.

Belongs to the GrpE family. In terms of assembly, homodimer.

The protein localises to the cytoplasm. In terms of biological role, participates actively in the response to hyperosmotic and heat shock by preventing the aggregation of stress-denatured proteins, in association with DnaK and GrpE. It is the nucleotide exchange factor for DnaK and may function as a thermosensor. Unfolded proteins bind initially to DnaJ; upon interaction with the DnaJ-bound protein, DnaK hydrolyzes its bound ATP, resulting in the formation of a stable complex. GrpE releases ADP from DnaK; ATP binding to DnaK triggers the release of the substrate protein, thus completing the reaction cycle. Several rounds of ATP-dependent interactions between DnaJ, DnaK and GrpE are required for fully efficient folding. The protein is Protein GrpE of Methylocella silvestris (strain DSM 15510 / CIP 108128 / LMG 27833 / NCIMB 13906 / BL2).